Reading from the N-terminus, the 142-residue chain is Large ribosomal subunit protein uL13 (142 aa).

This sequence belongs to the universal ribosomal protein uL13 family. In terms of assembly, part of the 50S ribosomal subunit.

In terms of biological role, this protein is one of the early assembly proteins of the 50S ribosomal subunit, although it is not seen to bind rRNA by itself. It is important during the early stages of 50S assembly. This chain is Large ribosomal subunit protein uL13, found in Bordetella avium (strain 197N).